Here is a 367-residue protein sequence, read N- to C-terminus: Protein-glutamate methylesterase/protein-glutamine glutaminase 2 (367 aa).

The 118-residue stretch at 15–132 (RALIVDDSAL…SQSMHEMAEE (118 aa)) folds into the Response regulatory domain. D66 is modified (4-aspartylphosphate). The region spanning 172 to 367 (KTSVRNVLAI…MADEIVKIVR (196 aa)) is the CheB-type methylesterase domain. Catalysis depends on residues S184, H211, and D311.

This sequence belongs to the CheB family. Post-translationally, phosphorylated by CheA. Phosphorylation of the N-terminal regulatory domain activates the methylesterase activity.

It is found in the cytoplasm. The enzyme catalyses [protein]-L-glutamate 5-O-methyl ester + H2O = L-glutamyl-[protein] + methanol + H(+). The catalysed reaction is L-glutaminyl-[protein] + H2O = L-glutamyl-[protein] + NH4(+). Its function is as follows. Involved in chemotaxis. Part of a chemotaxis signal transduction system that modulates chemotaxis in response to various stimuli. Catalyzes the demethylation of specific methylglutamate residues introduced into the chemoreceptors (methyl-accepting chemotaxis proteins or MCP) by CheR. Also mediates the irreversible deamidation of specific glutamine residues to glutamic acid. In Methanosarcina mazei (strain ATCC BAA-159 / DSM 3647 / Goe1 / Go1 / JCM 11833 / OCM 88) (Methanosarcina frisia), this protein is Protein-glutamate methylesterase/protein-glutamine glutaminase 2.